The following is a 205-amino-acid chain: Ribonuclease HII (205 aa).

Positions 14–205 constitute an RNase H type-2 domain; sequence ERICGIDEAG…SFKVRRLNEA (192 aa). 3 residues coordinate a divalent metal cation: Asp-20, Glu-21, and Asp-117.

Belongs to the RNase HII family. Mn(2+) is required as a cofactor. It depends on Mg(2+) as a cofactor.

It localises to the cytoplasm. It catalyses the reaction Endonucleolytic cleavage to 5'-phosphomonoester.. In terms of biological role, endonuclease that specifically degrades the RNA of RNA-DNA hybrids. This Chlorobium phaeovibrioides (strain DSM 265 / 1930) (Prosthecochloris vibrioformis (strain DSM 265)) protein is Ribonuclease HII.